A 256-amino-acid chain; its full sequence is MTILDSIILGAIEGFTEFLPISSTGHLIVASEFLGLEQNAINKAYEVIIQFSAILAVIFNYKDKFSIKKIDLWMKVFIAFLPLAIIGFIFSTQIKELFSLHVVAVMFIVGGVVFLIVEKFFINEDEKTIYEVEAISLKQSLIIGFAQIFALIPGTSRAGSTIIGALLVGLSRKASAEFSFLLAFPVMGAVTAYDLLKHYKDFSEANLIILGVGFVTSFVVAYLSIKLFLKFLEKFTFFFFGVYRIVFGVILLLFFN.

Transmembrane regions (helical) follow at residues 1–21 (MTIL…FLPI), 39–59 (NAIN…AVIF), 70–90 (IDLW…GFIF), 97–117 (LFSL…FLIV), 134–154 (AISL…LIPG), 176–196 (AEFS…YDLL), 205–225 (ANLI…YLSI), and 235–255 (FTFF…LLFF).

The protein belongs to the UppP family.

Its subcellular location is the cell inner membrane. The enzyme catalyses di-trans,octa-cis-undecaprenyl diphosphate + H2O = di-trans,octa-cis-undecaprenyl phosphate + phosphate + H(+). Catalyzes the dephosphorylation of undecaprenyl diphosphate (UPP). Confers resistance to bacitracin. The protein is Undecaprenyl-diphosphatase of Sulfurimonas denitrificans (strain ATCC 33889 / DSM 1251) (Thiomicrospira denitrificans (strain ATCC 33889 / DSM 1251)).